The following is a 303-amino-acid chain: Pseudouridine-5'-phosphate glycosidase (303 aa).

E23 serves as the catalytic Proton donor. 2 residues coordinate substrate: K85 and V105. D137 is a binding site for Mn(2+). Residue 139-141 coordinates substrate; the sequence is SQD. K158 (nucleophile) is an active-site residue.

This sequence belongs to the pseudouridine-5'-phosphate glycosidase family. In terms of assembly, homotrimer. Requires Mn(2+) as cofactor.

It catalyses the reaction D-ribose 5-phosphate + uracil = psi-UMP + H2O. Its function is as follows. Catalyzes the reversible cleavage of pseudouridine 5'-phosphate (PsiMP) to ribose 5-phosphate and uracil. Functions biologically in the cleavage direction, as part of a pseudouridine degradation pathway. The sequence is that of Pseudouridine-5'-phosphate glycosidase from Myxococcus xanthus (strain DK1622).